The primary structure comprises 179 residues: Cell division protein ZapC (179 aa).

The protein belongs to the ZapC family. As to quaternary structure, interacts directly with FtsZ.

The protein resides in the cytoplasm. Contributes to the efficiency of the cell division process by stabilizing the polymeric form of the cell division protein FtsZ. Acts by promoting interactions between FtsZ protofilaments and suppressing the GTPase activity of FtsZ. This chain is Cell division protein ZapC, found in Photobacterium profundum (strain SS9).